The chain runs to 485 residues: GTPase Der (485 aa).

EngA-type G domains are found at residues 3-167 and 176-349; these read PTIA…PEPE and PVFA…NAAM. GTP contacts are provided by residues 9-16, 56-60, 119-122, 182-189, 229-233, and 294-297; these read GRPNVGKS, DTGGF, NKGE, DTAGV, and NKWD. Positions 350–434 constitute a KH-like domain; it reads IKMPTPKITR…PLRIQYNVSE (85 aa). The disordered stretch occupies residues 435-485; the sequence is NPYENADDKPKKKPLRRVSLSNRIEKREGRKEEKNRFKKKTKVSVKKQFSK. A compositionally biased stretch (basic and acidic residues) spans 457 to 469; it reads RIEKREGRKEEKN. A compositionally biased stretch (basic residues) spans 470–485; it reads RFKKKTKVSVKKQFSK.

Belongs to the TRAFAC class TrmE-Era-EngA-EngB-Septin-like GTPase superfamily. EngA (Der) GTPase family. In terms of assembly, associates with the 50S ribosomal subunit.

GTPase that plays an essential role in the late steps of ribosome biogenesis. This Neisseria meningitidis serogroup A / serotype 4A (strain DSM 15465 / Z2491) protein is GTPase Der.